The following is a 565-amino-acid chain: Laccase-12 (565 aa).

An N-terminal signal peptide occupies residues 1-24; the sequence is MTTVHTFSILLFFCSLFSASLIIA. 2 consecutive Plastocyanin-like domains span residues 32 to 148 and 158 to 310; these read VIQE…PTPG and RQTA…YKKT. The N-linked (GlcNAc...) asparagine glycan is linked to asparagine 78. The Cu cation site is built by histidine 82, histidine 84, histidine 127, and histidine 129. Asparagine 187, asparagine 203, asparagine 298, asparagine 325, asparagine 377, asparagine 387, asparagine 395, and asparagine 428 each carry an N-linked (GlcNAc...) asparagine glycan. The Plastocyanin-like 3 domain occupies 413 to 549; the sequence is DFPSKPPVKF…AMAFLVDNGV (137 aa). Cu cation is bound by residues histidine 466, histidine 469, histidine 471, histidine 528, cysteine 529, histidine 530, and histidine 534.

Belongs to the multicopper oxidase family. The cofactor is Cu cation. In terms of tissue distribution, predominantly expressed in the inflorescence stem.

It localises to the secreted. Its subcellular location is the extracellular space. It is found in the apoplast. It catalyses the reaction 4 hydroquinone + O2 = 4 benzosemiquinone + 2 H2O. Its function is as follows. Lignin degradation and detoxification of lignin-derived products. This Arabidopsis thaliana (Mouse-ear cress) protein is Laccase-12 (LAC12).